The sequence spans 220 residues: Deoxyribose-phosphate aldolase (220 aa).

The active-site Proton donor/acceptor is Asp89. The active-site Schiff-base intermediate with acetaldehyde is the Lys151. Catalysis depends on Lys180, which acts as the Proton donor/acceptor.

Belongs to the DeoC/FbaB aldolase family. DeoC type 1 subfamily.

The protein resides in the cytoplasm. The enzyme catalyses 2-deoxy-D-ribose 5-phosphate = D-glyceraldehyde 3-phosphate + acetaldehyde. It participates in carbohydrate degradation; 2-deoxy-D-ribose 1-phosphate degradation; D-glyceraldehyde 3-phosphate and acetaldehyde from 2-deoxy-alpha-D-ribose 1-phosphate: step 2/2. Catalyzes a reversible aldol reaction between acetaldehyde and D-glyceraldehyde 3-phosphate to generate 2-deoxy-D-ribose 5-phosphate. This Streptococcus gordonii (strain Challis / ATCC 35105 / BCRC 15272 / CH1 / DL1 / V288) protein is Deoxyribose-phosphate aldolase.